A 366-amino-acid polypeptide reads, in one-letter code: 3-isopropylmalate dehydrogenase (366 aa).

NAD(+) is bound at residue 78–91 (GPKWEDLPSHLQPE). Positions 99, 109, 138, and 227 each coordinate substrate. Asp227, Asp251, and Asp255 together coordinate Mg(2+). 285–297 (GSAPDIKGKNIAN) contributes to the NAD(+) binding site.

It belongs to the isocitrate and isopropylmalate dehydrogenases family. LeuB type 1 subfamily. Homodimer. The cofactor is Mg(2+). It depends on Mn(2+) as a cofactor.

It is found in the cytoplasm. It catalyses the reaction (2R,3S)-3-isopropylmalate + NAD(+) = 4-methyl-2-oxopentanoate + CO2 + NADH. Its pathway is amino-acid biosynthesis; L-leucine biosynthesis; L-leucine from 3-methyl-2-oxobutanoate: step 3/4. Its function is as follows. Catalyzes the oxidation of 3-carboxy-2-hydroxy-4-methylpentanoate (3-isopropylmalate) to 3-carboxy-4-methyl-2-oxopentanoate. The product decarboxylates to 4-methyl-2 oxopentanoate. In Buchnera aphidicola subsp. Baizongia pistaciae (strain Bp), this protein is 3-isopropylmalate dehydrogenase.